Reading from the N-terminus, the 807-residue chain is Shutoff protein (807 aa).

Positions 1-88 are disordered; that stretch reads MESVEKKDSL…QVGRGDERHG (88 aa). Residues 16–29 show a composition bias toward polar residues; it reads FATTASTDAANAPT. Composition is skewed to basic and acidic residues over residues 59–70 and 79–88; these read RSVPTEDKKQDQ and QVGRGDERHG. Residues 280 to 345 form a binding to host EIF4G region; it reads VMSELIVRRA…AVLVTVELEC (66 aa). In terms of domain architecture, RRM spans 348–466; that stretch reads RFFADPEMQR…DLWTAFNERS (119 aa). 2 positions are modified to phosphotyrosine; by host: Y365 and Y682. Positions 684-807 are disordered; it reads DPQSGEELNP…AGTARSPTQP (124 aa). Positions 726–743 are enriched in gly residues; that stretch reads GRGGILGQSGRGGFGRGG. The segment covering 744–755 has biased composition (basic and acidic residues); sequence GGHDGRLGEPRR. Residues 756-765 show a composition bias toward basic residues; it reads GSFRGRRGVR.

This sequence belongs to the adenoviridae shutoff protein family. In terms of assembly, monomer. Interacts with hexon protein; this interaction allows chaperoning and trimerization of hexon proteins. Interacts (via N-terminus) with host initiation factor EIF4G (via C-terminus). Interacts (via RRM domain) with viral mRNAs that contain the tripartite leader; this interaction allows ribosome shunting and expression of viral late mRNAs. Post-translationally, might be cleaved by the viral protease. In terms of processing, phosphorylated. Tyrosine phosphorylation enhances preferential binding to tripartite leader mRNAs and allows ribosome shunting. Methylated. Asymmetric dimethylation by host PRMT1 of the Arg/Gly-rich region may regulate shutoff protein binding to hexon and promote the capsid assembly in the nucleus.

The protein localises to the host cytoplasm. In terms of biological role, protein that inhibits host translation while promoting late viral translation by ribosome shunting. Blocks host cap-dependent translation by binding to eIF4G, displacing MKNK1 from cap initiation complexes and preventing EIF4E phosphorylation. Binds to the tripartite leader sequence of viral late mRNAs and recruits host eIF4G, PABPC1/poly-A binding protein and 40S ribosomes subunits on viral mRNAs, allowing ribosome shunting and efficient translation of late viral mRNAs even though conventional translation via ribosome scanning from the cap has been shut off in the host cell. During assembly, acts as a chaperone protein that helps hexon proteins assembly into trimers. The protein is Shutoff protein of Homo sapiens (Human).